Consider the following 150-residue polypeptide: Large ribosomal subunit protein bL9 (150 aa).

It belongs to the bacterial ribosomal protein bL9 family.

In terms of biological role, binds to the 23S rRNA. This is Large ribosomal subunit protein bL9 from Neisseria gonorrhoeae (strain ATCC 700825 / FA 1090).